Here is a 425-residue protein sequence, read N- to C-terminus: Riboflavin biosynthesis protein RibBA (425 aa).

Residues 1-204 (MTRLDSVERA…IADLIEWRRK (204 aa)) are DHBP synthase. Residues 28–29 (RE), aspartate 33, 141–145 (RPGHT), and glutamate 165 each bind D-ribulose 5-phosphate. Position 29 (glutamate 29) interacts with Mg(2+). Histidine 144 contributes to the Mg(2+) binding site. Positions 205–425 (HEKHIERIAE…HLPGEFGGAL (221 aa)) are GTP cyclohydrolase II. Residue 259 to 263 (RVHSE) coordinates GTP. Zn(2+)-binding residues include cysteine 264, cysteine 275, and cysteine 277. GTP-binding positions include glutamine 280, 303-305 (EGR), and threonine 325. Residue aspartate 337 is the Proton acceptor; for GTP cyclohydrolase activity of the active site. Arginine 339 (nucleophile; for GTP cyclohydrolase activity) is an active-site residue. The GTP site is built by threonine 360 and lysine 365.

The protein in the N-terminal section; belongs to the DHBP synthase family. In the C-terminal section; belongs to the GTP cyclohydrolase II family. The cofactor is Mg(2+). Mn(2+) is required as a cofactor. Requires Zn(2+) as cofactor.

The enzyme catalyses D-ribulose 5-phosphate = (2S)-2-hydroxy-3-oxobutyl phosphate + formate + H(+). The catalysed reaction is GTP + 4 H2O = 2,5-diamino-6-hydroxy-4-(5-phosphoribosylamino)-pyrimidine + formate + 2 phosphate + 3 H(+). It participates in cofactor biosynthesis; riboflavin biosynthesis; 2-hydroxy-3-oxobutyl phosphate from D-ribulose 5-phosphate: step 1/1. Its pathway is cofactor biosynthesis; riboflavin biosynthesis; 5-amino-6-(D-ribitylamino)uracil from GTP: step 1/4. Functionally, catalyzes the conversion of D-ribulose 5-phosphate to formate and 3,4-dihydroxy-2-butanone 4-phosphate. Its function is as follows. Catalyzes the conversion of GTP to 2,5-diamino-6-ribosylamino-4(3H)-pyrimidinone 5'-phosphate (DARP), formate and pyrophosphate. This chain is Riboflavin biosynthesis protein RibBA, found in Mycolicibacterium paratuberculosis (strain ATCC BAA-968 / K-10) (Mycobacterium paratuberculosis).